Here is a 319-residue protein sequence, read N- to C-terminus: Acetyl esterase (319 aa).

Residues 91 to 93 (HGG) carry the Involved in the stabilization of the negatively charged intermediate by the formation of the oxyanion hole motif. Active-site residues include S165, D262, and H292.

Belongs to the 'GDXG' lipolytic enzyme family. As to quaternary structure, homodimer. Interacts with MalT and MelA.

It is found in the cytoplasm. Displays esterase activity towards short chain fatty esters (acyl chain length of up to 8 carbons). Able to hydrolyze triacetylglycerol (triacetin) and tributyrylglycerol (tributyrin), but not trioleylglycerol (triolein) or cholesterol oleate. Negatively regulates MalT activity by antagonizing maltotriose binding. Inhibits MelA galactosidase activity. In Escherichia coli O81 (strain ED1a), this protein is Acetyl esterase.